Here is a 153-residue protein sequence, read N- to C-terminus: Bifunctional protein GAL10 (153 aa).

The segment at 1-153 (MSDDIFLVTG…IPIPEHCPME (153 aa)) is galactowaldenase.

It in the N-terminal section; belongs to the NAD(P)-dependent epimerase/dehydratase family. This sequence in the C-terminal section; belongs to the aldose epimerase family. NAD(+) serves as cofactor.

The enzyme catalyses UDP-alpha-D-glucose = UDP-alpha-D-galactose. The catalysed reaction is alpha-D-glucose = beta-D-glucose. It functions in the pathway carbohydrate metabolism; galactose metabolism. The protein operates within carbohydrate metabolism; hexose metabolism. Its function is as follows. Mutarotase converts alpha-aldose to the beta-anomer. It is active on D-glucose, L-arabinose, D-xylose, D-galactose, maltose and lactose. This chain is Bifunctional protein GAL10 (GAL10), found in Candida maltosa (Yeast).